An 866-amino-acid polypeptide reads, in one-letter code: Leucine--tRNA ligase (866 aa).

Positions 59–69 (PYPSGDLHMGH) match the 'HIGH' region motif. Residues 393–421 (VPVIKTDPQTGEPLLPESAPLESPAETGQ) form a disordered region. The span at 404 to 418 (EPLLPESAPLESPAE) shows a compositional bias: low complexity. A 'KMSKS' region motif is present at residues 628–632 (AMSKS). Residue lysine 631 coordinates ATP.

The protein belongs to the class-I aminoacyl-tRNA synthetase family.

It is found in the cytoplasm. It carries out the reaction tRNA(Leu) + L-leucine + ATP = L-leucyl-tRNA(Leu) + AMP + diphosphate. The sequence is that of Leucine--tRNA ligase from Leifsonia xyli subsp. xyli (strain CTCB07).